Here is a 345-residue protein sequence, read N- to C-terminus: 3-isopropylmalate dehydrogenase (345 aa).

Glycine 76–glutamate 87 serves as a coordination point for NAD(+). 4 residues coordinate substrate: arginine 94, arginine 104, arginine 132, and aspartate 216. Aspartate 216, aspartate 240, and aspartate 244 together coordinate Mg(2+). Position 274-286 (glycine 274–asparagine 286) interacts with NAD(+).

The protein belongs to the isocitrate and isopropylmalate dehydrogenases family. LeuB type 1 subfamily. Homodimer. It depends on Mg(2+) as a cofactor. Requires Mn(2+) as cofactor.

Its subcellular location is the cytoplasm. It carries out the reaction (2R,3S)-3-isopropylmalate + NAD(+) = 4-methyl-2-oxopentanoate + CO2 + NADH. The protein operates within amino-acid biosynthesis; L-leucine biosynthesis; L-leucine from 3-methyl-2-oxobutanoate: step 3/4. Functionally, catalyzes the oxidation of 3-carboxy-2-hydroxy-4-methylpentanoate (3-isopropylmalate) to 3-carboxy-4-methyl-2-oxopentanoate. The product decarboxylates to 4-methyl-2 oxopentanoate. The polypeptide is 3-isopropylmalate dehydrogenase (Streptococcus thermophilus (strain CNRZ 1066)).